The primary structure comprises 322 residues: Acetyl-coenzyme A carboxylase carboxyl transferase subunit alpha (322 aa).

Positions 40–297 constitute a CoA carboxyltransferase C-terminal domain; it reads PLQKKLGDLR…RETLTRNLEE (258 aa).

This sequence belongs to the AccA family. Acetyl-CoA carboxylase is a heterohexamer composed of biotin carboxyl carrier protein (AccB), biotin carboxylase (AccC) and two subunits each of ACCase subunit alpha (AccA) and ACCase subunit beta (AccD).

It localises to the cytoplasm. The enzyme catalyses N(6)-carboxybiotinyl-L-lysyl-[protein] + acetyl-CoA = N(6)-biotinyl-L-lysyl-[protein] + malonyl-CoA. The protein operates within lipid metabolism; malonyl-CoA biosynthesis; malonyl-CoA from acetyl-CoA: step 1/1. Its function is as follows. Component of the acetyl coenzyme A carboxylase (ACC) complex. First, biotin carboxylase catalyzes the carboxylation of biotin on its carrier protein (BCCP) and then the CO(2) group is transferred by the carboxyltransferase to acetyl-CoA to form malonyl-CoA. This is Acetyl-coenzyme A carboxylase carboxyl transferase subunit alpha from Gemmatimonas aurantiaca (strain DSM 14586 / JCM 11422 / NBRC 100505 / T-27).